Reading from the N-terminus, the 162-residue chain is 2-C-methyl-D-erythritol 2,4-cyclodiphosphate synthase (162 aa).

A divalent metal cation is bound by residues D10 and H12. Residues 10–12 (DVH) and 36–37 (HS) each bind 4-CDP-2-C-methyl-D-erythritol 2-phosphate. H44 provides a ligand contact to a divalent metal cation. Residues 58–60 (DIG), 63–67 (FPDTD), and R144 contribute to the 4-CDP-2-C-methyl-D-erythritol 2-phosphate site.

Belongs to the IspF family. In terms of assembly, homotrimer. A divalent metal cation is required as a cofactor.

It carries out the reaction 4-CDP-2-C-methyl-D-erythritol 2-phosphate = 2-C-methyl-D-erythritol 2,4-cyclic diphosphate + CMP. Its pathway is isoprenoid biosynthesis; isopentenyl diphosphate biosynthesis via DXP pathway; isopentenyl diphosphate from 1-deoxy-D-xylulose 5-phosphate: step 4/6. Functionally, involved in the biosynthesis of isopentenyl diphosphate (IPP) and dimethylallyl diphosphate (DMAPP), two major building blocks of isoprenoid compounds. Catalyzes the conversion of 4-diphosphocytidyl-2-C-methyl-D-erythritol 2-phosphate (CDP-ME2P) to 2-C-methyl-D-erythritol 2,4-cyclodiphosphate (ME-CPP) with a corresponding release of cytidine 5-monophosphate (CMP). This chain is 2-C-methyl-D-erythritol 2,4-cyclodiphosphate synthase, found in Laribacter hongkongensis (strain HLHK9).